Reading from the N-terminus, the 72-residue chain is Translation initiation factor IF-1 (72 aa).

Positions 1-72 (MAKDDVIEVE…TRGRITYRYK (72 aa)) constitute an S1-like domain. Tyr60 carries the post-translational modification Phosphotyrosine.

The protein belongs to the IF-1 family. Component of the 30S ribosomal translation pre-initiation complex which assembles on the 30S ribosome in the order IF-2 and IF-3, IF-1 and N-formylmethionyl-tRNA(fMet); mRNA recruitment can occur at any time during PIC assembly.

Its subcellular location is the cytoplasm. Functionally, one of the essential components for the initiation of protein synthesis. Stabilizes the binding of IF-2 and IF-3 on the 30S subunit to which N-formylmethionyl-tRNA(fMet) subsequently binds. Helps modulate mRNA selection, yielding the 30S pre-initiation complex (PIC). Upon addition of the 50S ribosomal subunit IF-1, IF-2 and IF-3 are released leaving the mature 70S translation initiation complex. This is Translation initiation factor IF-1 from Bacillus licheniformis (strain ATCC 14580 / DSM 13 / JCM 2505 / CCUG 7422 / NBRC 12200 / NCIMB 9375 / NCTC 10341 / NRRL NRS-1264 / Gibson 46).